A 436-amino-acid polypeptide reads, in one-letter code: Protein TIC 40, chloroplastic (436 aa).

A chloroplast-targeting transit peptide spans 1-39 (MENLNLALVSSPKPLLLGHSSSKNVFSGRKSFTFGTFRV). The transit peptide at 40-72 (SANSSSSHVTRAASKSHQNLKSVQGKVNAHDFA) directs the protein to the chloroplast; inner membrane. Residues 73-98 (SISSSNGQETTSVGVSPQLSPPPPST) lie on the Chloroplast intermembrane side of the membrane. Positions 74-90 (ISSSNGQETTSVGVSPQ) are enriched in polar residues. Positions 74–95 (ISSSNGQETTSVGVSPQLSPPP) are disordered. Residues 99–119 (VGSPLFWIGIGVGFSALFSVV) traverse the membrane as a helical segment. The Stromal segment spans residues 120 to 436 (ASRVKKYAMQ…ELFPGVSGPP (317 aa)). Disordered regions lie at residues 160–191 (PMPS…QSTV) and 245–285 (DVDE…RKSA). A compositionally biased stretch (low complexity) spans 177–191 (QSQATSTRSASQSTV). Residues 245 to 257 (DVDESSSFKEARA) are compositionally biased toward basic and acidic residues. 2 consecutive STI1 domains span residues 297–331 (DPTV…RQQL) and 373–412 (PQEV…IVKY).

As to quaternary structure, part of the Tic complex. Interacts with HSP93, TIC110, TIC62 and TOC75.

It localises to the plastid. Its subcellular location is the chloroplast inner membrane. In terms of biological role, involved in protein precursor import into chloroplasts. Part of the motor complex consisting of a co-chaperone (TIC40) and a chaperone (HSP93) associated with the import channel (TIC110). Causes the release of bound transit peptides from TIC110 and stimulates ATP hydrolysis by HSP93. Involved in reinsertion of proteins from the chloroplast stroma into the inner membrane. This is Protein TIC 40, chloroplastic (TIC40) from Pisum sativum (Garden pea).